The following is a 213-amino-acid chain: Orotate phosphoribosyltransferase (213 aa).

Lys-26 contacts 5-phospho-alpha-D-ribose 1-diphosphate. 34–35 (FF) contributes to the orotate binding site. Residues 72-73 (YK), Arg-99, Lys-100, Lys-103, His-105, and 124-132 (DDVITAGTA) contribute to the 5-phospho-alpha-D-ribose 1-diphosphate site. Residues Thr-128 and Arg-156 each contribute to the orotate site.

This sequence belongs to the purine/pyrimidine phosphoribosyltransferase family. PyrE subfamily. In terms of assembly, homodimer. Mg(2+) serves as cofactor.

It catalyses the reaction orotidine 5'-phosphate + diphosphate = orotate + 5-phospho-alpha-D-ribose 1-diphosphate. It participates in pyrimidine metabolism; UMP biosynthesis via de novo pathway; UMP from orotate: step 1/2. In terms of biological role, catalyzes the transfer of a ribosyl phosphate group from 5-phosphoribose 1-diphosphate to orotate, leading to the formation of orotidine monophosphate (OMP). In Salmonella agona (strain SL483), this protein is Orotate phosphoribosyltransferase.